A 674-amino-acid chain; its full sequence is L-type lectin-domain containing receptor kinase SIT1 (674 aa).

The N-terminal stretch at Met-1 to Ala-27 is a signal peptide. Over Ala-28–Lys-301 the chain is Extracellular. Residues Asp-31–Gly-275 are legume-lectin like. Asn-42, Asn-61, Asn-143, Asn-196, Asn-219, Asn-240, and Asn-281 each carry an N-linked (GlcNAc...) asparagine glycan. The chain crosses the membrane as a helical span at residues Ile-302 to Ile-322. At His-323–Arg-674 the chain is on the cytoplasmic side. One can recognise a Protein kinase domain in the interval Phe-357–Leu-636. Residues Leu-363–Val-371 and Lys-386 each bind ATP. Catalysis depends on Asp-482, which acts as the Proton acceptor. Phosphothreonine is present on residues Thr-511, Thr-515, Thr-516, and Thr-521.

The protein in the C-terminal section; belongs to the protein kinase superfamily. Ser/Thr protein kinase family. This sequence in the N-terminal section; belongs to the leguminous lectin family. In terms of assembly, interacts with B'KAPPA. Autophosphorylated at Thr-511, Thr-515 or Thr-516, and Thr-521 in response to salt stress. Dephosphorylated by phosphatase 2A in response to salt stress. As to expression, expressed in root epidermal cells.

The protein resides in the cell membrane. The catalysed reaction is L-seryl-[protein] + ATP = O-phospho-L-seryl-[protein] + ADP + H(+). The enzyme catalyses L-threonyl-[protein] + ATP = O-phospho-L-threonyl-[protein] + ADP + H(+). Its activity is regulated as follows. Activated by autophosphorylation in response to salt stress. Lectin-domain containing receptor kinase involved in salt stress response. Acts as a negative regulator of salt tolerance. Mediates salt sensitivity by phosphorylating and activating MPK3 and MPK6. Promotes ethylene production and mediates salt-induced ethylene signaling. Promotes the accumulation of reactive oxygen species (ROS) under salt stress conditions. Its kinase activity is triggered by salt stress and is required for its function in salt stress response. Phosphorylates B'KAPPA, a B regulatory subunit of phosphatase 2A (PP2A). This chain is L-type lectin-domain containing receptor kinase SIT1, found in Oryza sativa subsp. japonica (Rice).